Reading from the N-terminus, the 1639-residue chain is Merozoite surface protein 1 (1639 aa).

The first 19 residues, M1–C19, serve as a signal peptide directing secretion. 2 stretches are compositionally biased toward polar residues: residues S58–P67 and N107–D119. Disordered stretches follow at residues S58–S78 and V94–A122. Residues N116 and N268 are each glycosylated (N-linked (GlcNAc...) asparagine). The segment at K689–N764 is disordered. Composition is skewed to polar residues over residues T694–S704 and G711–G722. Residues V730–Q741 are compositionally biased toward low complexity. N-linked (GlcNAc...) asparagine glycans are attached at residues N764, N768, N783, and N844. The tract at residues S893 to H915 is disordered. N920, N964, N1058, N1165, and N1174 each carry an N-linked (GlcNAc...) asparagine glycan. Positions Q1002 to Y1116 are required for binding to host erythrocyte cell membrane. Residues V1199–P1212 are compositionally biased toward polar residues. The disordered stretch occupies residues V1199 to T1229. 2 N-linked (GlcNAc...) asparagine glycosylation sites follow: N1445 and N1526. 2 EGF-like domains span residues H1530–P1570 and N1571–S1618. 6 disulfide bridges follow: C1532–C1543, C1537–C1553, C1555–C1566, C1574–C1587, C1581–C1601, and C1603–C1617. The GPI-anchor amidated serine moiety is linked to residue S1618. A propeptide spans S1619–I1639 (removed in mature form).

In terms of assembly, forms a complex composed of subunits p83, p30, p38, and p42 which remain non-covalently associated; the complex is formed at the merozoite surface prior to egress from host erythrocytes. Forms a complex composed of processed MSP1 subunits, MSP6 subunit p36 and MSP7; the complex is formed at the merozoite surface prior to egress from host erythrocytes. Within the complex, interacts (via subunit p38) with MSP6 subunit p36 and (via subunits p83, p30 and p38) with MSP7 (via subunit p22). Forms a complex composed of MSP1, MSP6, DBLMSP1 and DBLMSP2. Within the complex, interacts (via subunit p38) with DBLMSP1 and DBLMSP2. Forms a complex composed of MSP1, and rhoptry proteins RhopH3, RAP1 and CLAG9/RhopH3. Within the complex, interacts (via subunits p42 and p19) with RhopH3 (via C-terminus). Forms a complex composed of MSP1, MSP6, MSP7, MSP9 and MSP3; within the complex, MSP6 and MSP9 mediate the binding to the host erythrocyte. Interacts (via subunits p19 and p42) with MSP9; the interaction is direct; MSP1 subunits p19 or p42, and MSP9 form a co-ligand complex that interacts with host SLC4A1/Band 3 protein. May interact with PFD6. Interacts with host spectrin. Interacts with host glycophorin GYPA in a sialic acid-independent manner. As to quaternary structure, interacts with host proinflammatory cytokine S100P; the interaction blocks S100P inflammatory and chemotactic activities. In terms of assembly, interacts with host SLC4A1/Band 3 (via 5ABC region) on the host erythrocyte surface in a sialic acid-independent manner. Post-translationally, the p190 precursor is cleaved by SUB1 prior to merozoite egress into 4 subunits p83, p30, p38, and p42 which remain non-covalently associated. SUB1-mediated proteolytic cleavage occurs in an orderly manner; the first cleavage occurs at the p83/p30 site, followed by cleavage at the p30/p38 site, the last cleavage occurs at the p38/p42 site. The order of cleavage is essential for parasite viability. SUB1-mediated processing is essential for merozoite egress. In a second processing step during erythrocyte invasion, p42 is cleaved by SUB2 into p33 and p19; the latter remains attached to the merozoite surface via its GPI-anchor and stays on the surface during the subsequent ring stage.

The protein resides in the cell membrane. It localises to the secreted. Its subcellular location is the vacuole membrane. During the asexual blood stage, involved in merozoite egress from host erythrocytes possibly via its interaction with the host cytoskeleton protein spectrin resulting in the destabilization of the host cytoskeleton and thus leading to erythrocyte cell membrane rupture. Involved in the binding to host erythrocytes and is required for host erythrocyte invasion. In terms of biological role, by binding to host proinflammatory cytokine S100P may interfere with host immune responses. Its function is as follows. Involved in merozoite invasion of host erythrocytes. May play a role in the biogenesis and/or function of the food vacuole during the intraerythrocytic development. This chain is Merozoite surface protein 1, found in Plasmodium falciparum (isolate Wellcome).